The primary structure comprises 288 residues: Probable ketoamine kinase VP1481 (288 aa).

Asparagine 92–leucine 94 is an ATP binding site. Residue aspartate 195 is the Proton acceptor of the active site.

The protein belongs to the fructosamine kinase family.

Functionally, ketoamine kinase that phosphorylates ketoamines on the third carbon of the sugar moiety to generate ketoamine 3-phosphate. The chain is Probable ketoamine kinase VP1481 from Vibrio parahaemolyticus serotype O3:K6 (strain RIMD 2210633).